A 231-amino-acid polypeptide reads, in one-letter code: Enolase-phosphatase E1 (231 aa).

The Mg(2+) site is built by aspartate 11 and glutamate 13. Substrate-binding positions include 125–126 (SS) and lysine 162. Position 188 (aspartate 188) interacts with Mg(2+).

It belongs to the HAD-like hydrolase superfamily. MasA/MtnC family. As to quaternary structure, monomer. Requires Mg(2+) as cofactor.

It localises to the cytoplasm. It is found in the nucleus. The enzyme catalyses 5-methylsulfanyl-2,3-dioxopentyl phosphate + H2O = 1,2-dihydroxy-5-(methylsulfanyl)pent-1-en-3-one + phosphate. It participates in amino-acid biosynthesis; L-methionine biosynthesis via salvage pathway; L-methionine from S-methyl-5-thio-alpha-D-ribose 1-phosphate: step 3/6. Its pathway is amino-acid biosynthesis; L-methionine biosynthesis via salvage pathway; L-methionine from S-methyl-5-thio-alpha-D-ribose 1-phosphate: step 4/6. Its function is as follows. Bifunctional enzyme that catalyzes the enolization of 2,3-diketo-5-methylthiopentyl-1-phosphate (DK-MTP-1-P) into the intermediate 2-hydroxy-3-keto-5-methylthiopentenyl-1-phosphate (HK-MTPenyl-1-P), which is then dephosphorylated to form the acireductone 1,2-dihydroxy-3-keto-5-methylthiopentene (DHK-MTPene). The sequence is that of Enolase-phosphatase E1 from Pyricularia oryzae (strain 70-15 / ATCC MYA-4617 / FGSC 8958) (Rice blast fungus).